Here is a 64-residue protein sequence, read N- to C-terminus: Alpha-conotoxin CnIA (64 aa).

Positions 1-21 (MGMRMMFTVFLLVVLTTTVVS) are cleaved as a signal peptide. A propeptide spanning residues 22–47 (FPSDSASDGRDDEAKDERSDIYESKR) is cleaved from the precursor. 2 disulfide bridges follow: C51–C56 and C52–C62. At P54 the chain carries 4-hydroxyproline; in CnIK; partial. C62 is subject to Cysteine amide.

The protein belongs to the conotoxin A superfamily. As to expression, expressed by the venom duct.

The protein localises to the secreted. In terms of biological role, alpha-conotoxins act on postsynaptic membranes, they bind to the nicotinic acetylcholine receptors (nAChR) and thus inhibit them. CnIA and CnIB block muscular nAChR alpha-1/gamma and alpha-1/delta subunits. This chain is Alpha-conotoxin CnIA, found in Conus consors (Singed cone).